Consider the following 92-residue polypeptide: Small ribosomal subunit protein uS19 (92 aa).

It belongs to the universal ribosomal protein uS19 family.

Protein S19 forms a complex with S13 that binds strongly to the 16S ribosomal RNA. This is Small ribosomal subunit protein uS19 from Bifidobacterium longum subsp. infantis (strain ATCC 15697 / DSM 20088 / JCM 1222 / NCTC 11817 / S12).